The sequence spans 323 residues: Germination protease (323 aa).

A propeptide spanning residues 1-6 (MSVRTD) is cleaved from the precursor.

It belongs to the peptidase A25 family. As to quaternary structure, homotetramer. Autoproteolytically processed. The inactive tetrameric zymogen termed p46 autoprocesses to a smaller form termed p41, which is active only during spore germination.

It catalyses the reaction Endopeptidase action with P4 Glu or Asp, P1 preferably Glu &gt; Asp, P1' hydrophobic and P2' Ala.. In terms of biological role, initiates the rapid degradation of small, acid-soluble proteins during spore germination. The polypeptide is Germination protease (Clostridium tetani (strain Massachusetts / E88)).